The chain runs to 315 residues: Long form salivary protein D7L1 (315 aa).

Positions 1-18 (MIIVAVLLSFLAHLLVQA) are cleaved as a signal peptide. Intrachain disulfides connect Cys37-Cys73 and Cys69-Cys128. Trp55 is a thromboxane A2 binding site. Leukotriene C4 is bound at residue Trp58. A thromboxane A2-binding site is contributed by Tyr70. Positions 152 and 170 each coordinate leukotriene C4. Lys170 is a thromboxane A2 binding site. Cystine bridges form between Cys178/Cys211 and Cys252/Cys263.

It belongs to the PBP/GOBP family. As to expression, distal-lateral and median lobes of female salivary gland (at protein level). Not detected in male salivary gland (at protein level). Expressed in female salivary gland. Not detected in female carcass without salivary glands. Expressed in male salivary gland and other tissues.

It localises to the secreted. Functionally, modulates blood feeding of female mosquitoes on vertebrate species by binding and sequestering different mediators involved in the host response. Binds leukotriene C4, leukotriene D4, leukotriene E4 and stable analogs of thromboxane A2, U-46619 and carbocyclic TXA2. Binds weakly prostaglandins: PGD2, PGE2 and PGF2alpha. Does not bind leukotriene B4, biogenic amines, ADP, platelet activating phospholipid derivative PAF and arachidonic acid. Inhibits agonist-induced smooth muscle contraction. Inhibits platelet aggregation induced by low concentrations of collagen in thromboxane A2-dependent manner. In Anopheles stephensi (Indo-Pakistan malaria mosquito), this protein is Long form salivary protein D7L1.